A 398-amino-acid polypeptide reads, in one-letter code: Sphingosine 1-phosphate receptor 5 (398 aa).

At 1–40 the chain is on the extracellular side; the sequence is MEPGLLRPAPVSEVIVLHYNYTGKLRGARYQPGAGLRADA. A glycan (N-linked (GlcNAc...) asparagine) is linked at asparagine 20. The chain crosses the membrane as a helical span at residues 41–61; sequence VVCLAVCALIVLENLAVLVVL. At 62 to 70 the chain is on the cytoplasmic side; the sequence is GRHPRFHAP. A helical transmembrane segment spans residues 71 to 91; sequence MFLLLGSLTLSDLLAGAAYAA. The Extracellular segment spans residues 92-111; it reads NILLSGPLTLRLSPALWFAR. A helical transmembrane segment spans residues 112 to 132; the sequence is EGGVFVALAASVLSLLAIALE. Over 133–151 the chain is Cytoplasmic; the sequence is RLLTMERRGPAPAARRGRT. A helical membrane pass occupies residues 152 to 172; that stretch reads LALAAGAWGVSLLLGLLPALG. The Extracellular segment spans residues 173–191; that stretch reads WNCLGRLEACSTVLPLYAK. Residues 192–212 form a helical membrane-spanning segment; the sequence is AYVLFCVLAFVGILAAICGLY. Residues 213 to 252 lie on the Cytoplasmic side of the membrane; sequence ARIYCQVRAKAQRLRARPGAGEGTSARARGTPRSLALLRT. The helical transmembrane segment at 253–273 threads the bilayer; the sequence is LSVVLVAFVACWGPLFLLLLL. Residues 274 to 287 lie on the Extracellular side of the membrane; that stretch reads DVACPARACPVLLQ. The chain crosses the membrane as a helical span at residues 288–308; the sequence is ADPFLGLAMANSLLNPIIYTF. At 309-398 the chain is on the cytoplasmic side; the sequence is TNRDLRHALL…QTLVPPPAAD (90 aa). Cysteine 323 is lipidated: S-palmitoyl cysteine. Residues 332–398 form a disordered region; that stretch reads SGTSRSPGST…QTLVPPPAAD (67 aa). The span at 334–343 shows a compositional bias: low complexity; it reads TSRSPGSTLG. Phosphoserine is present on serine 337. A compositionally biased stretch (basic and acidic residues) spans 359 to 373; sequence SSSRSERSSPQRDGL. Phosphoserine is present on serine 381.

This sequence belongs to the G-protein coupled receptor 1 family.

The protein localises to the cell membrane. In terms of biological role, receptor for the lysosphingolipid sphingosine 1-phosphate (S1P). S1P is a bioactive lysophospholipid that elicits diverse physiological effect on most types of cells and tissues. Is coupled to both the G(i/O)alpha and G(12) subclass of heteromeric G-proteins. The sequence is that of Sphingosine 1-phosphate receptor 5 (S1PR5) from Sus scrofa (Pig).